The following is a 314-amino-acid chain: Nodulation protein D 1 (314 aa).

An HTH lysR-type domain is found at 6–63; it reads LDLNLLVALDALMTERNLTAAARKIHLSQPAMSAAVARLRTYFGDELFTMRGRELVPT. Positions 23-42 form a DNA-binding region, H-T-H motif; that stretch reads LTAAARKIHLSQPAMSAAVA.

This sequence belongs to the LysR transcriptional regulatory family.

Its function is as follows. NodD regulates the expression of the nodABCFE genes which encode other nodulation proteins. NodD is also a negative regulator of its own expression. Binds flavonoids as inducers. The protein is Nodulation protein D 1 (nodD1) of Bradyrhizobium sp. (strain NC92).